The primary structure comprises 387 residues: ATP phosphoribosyltransferase regulatory subunit (387 aa).

Belongs to the class-II aminoacyl-tRNA synthetase family. HisZ subfamily. In terms of assembly, heteromultimer composed of HisG and HisZ subunits.

It is found in the cytoplasm. It participates in amino-acid biosynthesis; L-histidine biosynthesis; L-histidine from 5-phospho-alpha-D-ribose 1-diphosphate: step 1/9. Functionally, required for the first step of histidine biosynthesis. May allow the feedback regulation of ATP phosphoribosyltransferase activity by histidine. The polypeptide is ATP phosphoribosyltransferase regulatory subunit (Psychrobacter cryohalolentis (strain ATCC BAA-1226 / DSM 17306 / VKM B-2378 / K5)).